The sequence spans 398 residues: Arylacetamide deacetylase (398 aa).

Topologically, residues Gly1–Thr4 are cytoplasmic. The chain crosses the membrane as a helical; Signal-anchor for type II membrane protein span at residues Val5–Leu22. Over Pro23–Val398 the chain is Lumenal. Residue Asn77 is glycosylated (N-linked (GlcNAc...) asparagine). Residues His110 to Gly112 carry the Involved in the stabilization of the negatively charged intermediate by the formation of the oxyanion hole motif. A disulfide bond links Cys115 and Cys339. Ser188 is an active-site residue. Asn281 is a glycosylation site (N-linked (GlcNAc...) asparagine). Active-site residues include Asp342 and His372.

The protein belongs to the 'GDXG' lipolytic enzyme family. In terms of processing, glycosylated.

Its subcellular location is the endoplasmic reticulum membrane. The protein localises to the microsome membrane. The catalysed reaction is a triacylglycerol + H2O = a diacylglycerol + a fatty acid + H(+). Its activity is regulated as follows. Inhibited by diisopropylphosphofluoridate (DFP). Displays cellular triglyceride lipase activity in liver, increases the levels of intracellular fatty acids derived from the hydrolysis of newly formed triglyceride stores and plays a role in very low-density lipoprotein assembly. Displays serine esterase activity in liver. Deacetylates a variety of arylacetamide substrates, including xenobiotic compounds and procarcinogens, converting them to the primary arylamide compounds and increasing their toxicity. This Oryctolagus cuniculus (Rabbit) protein is Arylacetamide deacetylase.